The chain runs to 82 residues: Putative membrane protein insertion efficiency factor (82 aa).

A disordered region spans residues 63–82 (PGGHDPVPESTILSKEKSVK).

The protein belongs to the UPF0161 family.

It localises to the cell inner membrane. Its function is as follows. Could be involved in insertion of integral membrane proteins into the membrane. This chain is Putative membrane protein insertion efficiency factor, found in Protochlamydia amoebophila (strain UWE25).